The primary structure comprises 205 residues: Protein phosphatase inhibitor 2 (205 aa).

The segment at Met-1–Ser-44 is disordered. N-acetylalanine is present on Ala-2. The interval Lys-12–Asn-17 is required for binding PPP1CC. Positions Thr-19 to Ala-29 are enriched in low complexity. A compositionally biased stretch (basic and acidic residues) spans Gln-31 to Ser-44. The tract at residues Lys-43–Thr-55 is required for binding PPP1CC. Ser-44 is subject to Phosphoserine; by ATM. Thr-73 is subject to Phosphothreonine; by GSK3. A phosphoserine mark is found at Ser-87 and Ser-89. Residues Thr-96 and Thr-116 each carry the phosphothreonine modification. A disordered region spans residues Leu-104–Met-142. Residues Ser-110–Glu-120 are compositionally biased toward basic and acidic residues. Ser-121, Ser-122, and Ser-130 each carry phosphoserine. A compositionally biased stretch (acidic residues) spans Ser-121–Ser-130. A compositionally biased stretch (basic and acidic residues) spans Pro-131–Met-142. Residues His-147 to Glu-150 form a required for binding PPP1CC catalytic center, displacing metal ions and inhibition of PPP1CC catalytic activity region. Residues Lys-163–Ser-205 are disordered. The segment covering Asp-167–Asp-179 has biased composition (acidic residues).

This sequence belongs to the protein phosphatase inhibitor 2 family. As to quaternary structure, heterodimer with PP1. Post-translationally, phosphorylation on Ser-44 by ATM activates PP1 by dissociating the PP1-PPP1R2 complex. Phosphorylation on Thr-73 by GSK3 activates PP1 by dissociating the PP1-PPP1R2 complex. Central nervous system.

Inhibitor of protein-phosphatase 1. This is Protein phosphatase inhibitor 2 (Ppp1r2) from Rattus norvegicus (Rat).